Reading from the N-terminus, the 113-residue chain is U11-theraphotoxin-Hhn1a (113 aa).

The first 21 residues, 1–21 (MNTVRVTFLLVFVLAVSLGQA), serve as a signal peptide directing secretion. Residues 22-74 (DKDENRMEMQEKTEQGKSYLDFAENLLLQKLEELEAKLLEEDSEESRNSRQKR) constitute a propeptide that is removed on maturation. The segment at 61 to 83 (EEDSEESRNSRQKRCIGEGVPCD) is disordered. Intrachain disulfides connect cysteine 75–cysteine 90, cysteine 82–cysteine 95, and cysteine 89–cysteine 110.

It belongs to the neurotoxin 14 (magi-1) family. 01 (HNTX-16) subfamily. In terms of tissue distribution, expressed by the venom gland.

It is found in the secreted. Functionally, probable ion channel inhibitor. The protein is U11-theraphotoxin-Hhn1a of Cyriopagopus hainanus (Chinese bird spider).